Reading from the N-terminus, the 414-residue chain is Probable cell wall biosynthesis protein LcpB (414 aa).

The tract at residues 1-108 (MDSPGQGEIA…PPVIAGDGGR (108 aa)) is disordered. Over 1-120 (MDSPGQGEIA…KAISFKPRGC (120 aa)) the chain is Cytoplasmic. Residues 9–23 (IARDSQGRPILDRYG) show a composition bias toward basic and acidic residues. Positions 33–42 (RQTPPTPRTP) are enriched in pro residues. Low complexity predominate over residues 43–53 (PVNETRVYQPR). Pro residues predominate over residues 54 to 80 (QTPPRQTPPRQTPPRQMPPRQTPPRQV). The helical transmembrane segment at 121–141 (LGTIAGVLAVGLVLVFVVTLW) threads the bilayer. The Periplasmic segment spans residues 142–414 (ADSKLNRVDA…GAEALFSSMR (273 aa)).

It belongs to the LytR/CpsA/Psr (LCP) family.

It is found in the cell inner membrane. This is Probable cell wall biosynthesis protein LcpB from Corynebacterium glutamicum (strain ATCC 13032 / DSM 20300 / JCM 1318 / BCRC 11384 / CCUG 27702 / LMG 3730 / NBRC 12168 / NCIMB 10025 / NRRL B-2784 / 534).